The primary structure comprises 318 residues: Acetyl-coenzyme A carboxylase carboxyl transferase subunit alpha (318 aa).

The region spanning 32–293 is the CoA carboxyltransferase C-terminal domain; sequence DLSQEIESLE…KKALQKHLGE (262 aa).

This sequence belongs to the AccA family. In terms of assembly, acetyl-CoA carboxylase is a heterohexamer composed of biotin carboxyl carrier protein (AccB), biotin carboxylase (AccC) and two subunits each of ACCase subunit alpha (AccA) and ACCase subunit beta (AccD).

Its subcellular location is the cytoplasm. The catalysed reaction is N(6)-carboxybiotinyl-L-lysyl-[protein] + acetyl-CoA = N(6)-biotinyl-L-lysyl-[protein] + malonyl-CoA. It participates in lipid metabolism; malonyl-CoA biosynthesis; malonyl-CoA from acetyl-CoA: step 1/1. In terms of biological role, component of the acetyl coenzyme A carboxylase (ACC) complex. First, biotin carboxylase catalyzes the carboxylation of biotin on its carrier protein (BCCP) and then the CO(2) group is transferred by the carboxyltransferase to acetyl-CoA to form malonyl-CoA. This is Acetyl-coenzyme A carboxylase carboxyl transferase subunit alpha from Syntrophomonas wolfei subsp. wolfei (strain DSM 2245B / Goettingen).